The chain runs to 516 residues: UDP-N-acetylmuramyl-tripeptide synthetase (516 aa).

UDP-N-acetyl-alpha-D-muramoyl-L-alanyl-D-glutamate is bound at residue serine 38. 116–122 (GTKGKTT) is an ATP binding site. UDP-N-acetyl-alpha-D-muramoyl-L-alanyl-D-glutamate-binding positions include 162-163 (TT), serine 189, and arginine 197. Lysine 231 carries the N6-carboxylysine modification.

The protein belongs to the MurCDEF family. MurE subfamily. Carboxylation is probably crucial for Mg(2+) binding and, consequently, for the gamma-phosphate positioning of ATP.

Its subcellular location is the cytoplasm. It functions in the pathway cell wall biogenesis; peptidoglycan biosynthesis. In terms of biological role, catalyzes the addition of an amino acid to the nucleotide precursor UDP-N-acetylmuramoyl-L-alanyl-D-glutamate (UMAG) in the biosynthesis of bacterial cell-wall peptidoglycan. The chain is UDP-N-acetylmuramyl-tripeptide synthetase from Lactobacillus delbrueckii subsp. bulgaricus (strain ATCC 11842 / DSM 20081 / BCRC 10696 / JCM 1002 / NBRC 13953 / NCIMB 11778 / NCTC 12712 / WDCM 00102 / Lb 14).